The following is a 296-amino-acid chain: MLYQQIASNKRKTVVLLIVFFCLLAAIGAAVGYLVLGSYQFGLVLALIIGVIYAVSMIFQSTNVVMSMNNAREVTEDEAPNYFHIVEDMAMIAQIPMPRVFIVEDDSLNAFATGSKPENAAVAATTGLLAVMNREELEGVIGHEVSHIRNYDIRISTIAVALASAVTLISSIGSRMLFYGGGRRRDDDREDGGNILVLIFSILSLILAPLAASLVQLAISRQREYLADASSVELTRNPQGMISALEKLDRSEPMGHPVDDASAALYINDPTKKEGLKSLFYTHPPIADRIERLRHM.

A run of 2 helical transmembrane segments spans residues 14–34 (VVLL…VGYL) and 39–59 (YQFG…SMIF). H143 contacts Zn(2+). The active site involves E144. H147 lines the Zn(2+) pocket. 2 helical membrane-spanning segments follow: residues 158–178 (IAVA…RMLF) and 195–215 (ILVL…ASLV). A Zn(2+)-binding site is contributed by E224.

It belongs to the peptidase M48B family. Requires Zn(2+) as cofactor.

The protein resides in the cell membrane. In Streptococcus agalactiae serotype Ia (strain ATCC 27591 / A909 / CDC SS700), this protein is Protease HtpX homolog.